A 574-amino-acid polypeptide reads, in one-letter code: MSLLDLVLLLLVLGLGGVLLLRRKGEDRSAQEARELLEAARREAREVLEAARKEARDILEAARHEAKALRQEAEARAKAQREEVEAELRRRLEAAEAEAKKRLEEAGERLKAEREELRAERERLRSLQEELKEERERLKAEREELRREGERLAKRAEALDARAARLEEAEAELVRKEEALKAEARALEERFKEVERRLYEVAGLTPEEARRLVLERLDRELEEEKAQRVRAALERARLEARREAQKILAQAMQRQASETAAQLAVTVVPIPSDAMKGRIIGREGRNIRAFEALTGVDLIIDDTPDAVLLSSFNPIRREIARMALEELLKDGRIHPSRIEEVVEKAKQEMKTFIYERGEEAALEAGVVGLKPGLIQLLGRLHFRSSYGQNVLKHSIQVAHLAGIMAAELGLDAALARRAGLLHDIGKSVDREVEGSHVEIGIALARRFGEPMEVVDAIAHHHDPDNAETLYAVLVAAADALSAARPGARRESLEEYLQRLEALERIALSFPGVETAFAVQAGREVRVIVKPEKISDAKATLLAREIASRIEKEMNYPGQVQVTVVRETRAVEYAR.

Residues 1-21 form a helical membrane-spanning segment; that stretch reads MSLLDLVLLLLVLGLGGVLLL. A KH domain is found at 264 to 327; sequence AVTVVPIPSD…EIARMALEEL (64 aa). In terms of domain architecture, HD spans 390–483; the sequence is VLKHSIQVAH…VAAADALSAA (94 aa).

The protein belongs to the RNase Y family.

It localises to the cell membrane. In terms of biological role, endoribonuclease that initiates mRNA decay. The polypeptide is Ribonuclease Y (Thermus thermophilus (strain ATCC BAA-163 / DSM 7039 / HB27)).